The primary structure comprises 94 residues: Long neurotoxin LNTX8 (94 aa).

The first 21 residues, 1–21, serve as a signal peptide directing secretion; the sequence is MKTLLLTLVVVTIMCLDLGYT. Intrachain disulfides connect cysteine 24–cysteine 43, cysteine 36–cysteine 64, cysteine 49–cysteine 53, cysteine 68–cysteine 79, and cysteine 80–cysteine 85.

This sequence belongs to the three-finger toxin family. Long-chain subfamily. Type II alpha-neurotoxin sub-subfamily. As to expression, expressed by the venom gland.

The protein resides in the secreted. Functionally, binds with high affinity to muscular (alpha-1/CHRNA1) and neuronal (alpha-7/CHRNA7) nicotinic acetylcholine receptor (nAChR) and inhibits acetylcholine from binding to the receptor, thereby impairing neuromuscular and neuronal transmission. The protein is Long neurotoxin LNTX8 of Ophiophagus hannah (King cobra).